The sequence spans 327 residues: Quinone oxidoreductase 1 (327 aa).

NADP(+) is bound by residues 42–46, Y130, 152–153, 173–177, Y192, S216, 238–241, 264–266, and R317; these read FIDTY, GV, GTAQK, FGNS, and PSL.

The protein belongs to the zinc-containing alcohol dehydrogenase family. Quinone oxidoreductase subfamily. As to quaternary structure, homodimer.

The catalysed reaction is 2 a quinone + NADPH + H(+) = 2 a 1,4-benzosemiquinone + NADP(+). This is Quinone oxidoreductase 1 (qorA) from Escherichia coli (strain K12).